We begin with the raw amino-acid sequence, 246 residues long: Triosephosphate isomerase (246 aa).

A substrate-binding site is contributed by 9–11 (NWK). The active-site Electrophile is the His-99. The active-site Proton acceptor is the Glu-168. Substrate is bound by residues Gly-174, Ser-207, and 228–229 (GG).

Belongs to the triosephosphate isomerase family. As to quaternary structure, homodimer.

The protein resides in the cytoplasm. It carries out the reaction D-glyceraldehyde 3-phosphate = dihydroxyacetone phosphate. The protein operates within carbohydrate biosynthesis; gluconeogenesis. Its pathway is carbohydrate degradation; glycolysis; D-glyceraldehyde 3-phosphate from glycerone phosphate: step 1/1. Involved in the gluconeogenesis. Catalyzes stereospecifically the conversion of dihydroxyacetone phosphate (DHAP) to D-glyceraldehyde-3-phosphate (G3P). The sequence is that of Triosephosphate isomerase from Prochlorococcus marinus (strain NATL2A).